Consider the following 353-residue polypeptide: Outer membrane protein A (353 aa).

An N-terminal signal peptide occupies residues 1 to 21; it reads MKKTAIALAVALVGFATVAQA. A run of 8 beta stranded transmembrane segments spans residues 27-37, 56-67, 71-79, 97-108, 113-121, 148-157, 162-169, and 188-196; these read TWYTGGKLGWS, QLGAGAFFGYQA, LGFEMGYDW, QGVQLAAKLSYP, LDVYTRLGG, PLVALGAEYA, WATRMEYQ, and LLSVGVSYR. Repeat copies occupy residues 208–209, 210–211, 212–213, and 214–215. The tract at residues 208 to 215 is 4 X 2 AA approximate tandem repeats of A-P; it reads APTPAPAP. The OmpA-like domain occupies 217-345; the sequence is VDTKRFTLKS…RVEIEVKGYK (129 aa). Residues cysteine 318 and cysteine 330 are joined by a disulfide bond.

This sequence belongs to the outer membrane OOP (TC 1.B.6) superfamily. OmpA family. As to quaternary structure, monomer and homodimer.

The protein localises to the cell outer membrane. In terms of biological role, with TolR probably plays a role in maintaining the position of the peptidoglycan cell wall in the periplasm. Acts as a porin with low permeability that allows slow penetration of small solutes; an internal gate slows down solute passage. The chain is Outer membrane protein A from Yersinia pseudotuberculosis serotype I (strain IP32953).